Here is a 718-residue protein sequence, read N- to C-terminus: Catalase-peroxidase (718 aa).

The interval 1–24 is disordered; sequence MDQKSDNAGKCPVAHTVPKGRSNR. A cross-link (tryptophyl-tyrosyl-methioninium (Trp-Tyr) (with M-243)) is located at residues 95–217; it reads WHSAGTYRIT…LAAVQMGLIY (123 aa). The active-site Proton acceptor is H96. Positions 217 to 243 form a cross-link, tryptophyl-tyrosyl-methioninium (Tyr-Met) (with W-95); it reads YVNPEGPNGNPDPVAAAREIRETFARM. Position 258 (H258) interacts with heme b.

The protein belongs to the peroxidase family. Peroxidase/catalase subfamily. As to quaternary structure, homodimer or homotetramer. Requires heme b as cofactor. In terms of processing, formation of the three residue Trp-Tyr-Met cross-link is important for the catalase, but not the peroxidase activity of the enzyme.

The catalysed reaction is H2O2 + AH2 = A + 2 H2O. It carries out the reaction 2 H2O2 = O2 + 2 H2O. Its function is as follows. Bifunctional enzyme with both catalase and broad-spectrum peroxidase activity. The sequence is that of Catalase-peroxidase from Sinorhizobium fredii (strain NBRC 101917 / NGR234).